A 98-amino-acid chain; its full sequence is NADH-ubiquinone oxidoreductase chain 4L (98 aa).

Helical transmembrane passes span 1–21 (MVLI…GVLI), 36–56 (MMLS…MFSI), and 61–81 (LILL…LVSI).

This sequence belongs to the complex I subunit 4L family.

The protein localises to the mitochondrion membrane. It carries out the reaction a ubiquinone + NADH + 5 H(+)(in) = a ubiquinol + NAD(+) + 4 H(+)(out). Functionally, core subunit of the mitochondrial membrane respiratory chain NADH dehydrogenase (Complex I) which catalyzes electron transfer from NADH through the respiratory chain, using ubiquinone as an electron acceptor. Part of the enzyme membrane arm which is embedded in the lipid bilayer and involved in proton translocation. The polypeptide is NADH-ubiquinone oxidoreductase chain 4L (MT-ND4L) (Didelphis virginiana (North American opossum)).